The chain runs to 291 residues: Ribonuclease Z (291 aa).

Zn(2+) contacts are provided by His-61, His-63, Asp-65, His-66, His-133, Asp-201, and His-257. The active-site Proton acceptor is Asp-65.

Belongs to the RNase Z family. As to quaternary structure, homodimer. The cofactor is Zn(2+).

It carries out the reaction Endonucleolytic cleavage of RNA, removing extra 3' nucleotides from tRNA precursor, generating 3' termini of tRNAs. A 3'-hydroxy group is left at the tRNA terminus and a 5'-phosphoryl group is left at the trailer molecule.. Zinc phosphodiesterase, which displays some tRNA 3'-processing endonuclease activity. Probably involved in tRNA maturation, by removing a 3'-trailer from precursor tRNA. The polypeptide is Ribonuclease Z (Saccharolobus solfataricus (strain ATCC 35092 / DSM 1617 / JCM 11322 / P2) (Sulfolobus solfataricus)).